The sequence spans 213 residues: GTP cyclohydrolase 1 (213 aa).

3 residues coordinate Zn(2+): cysteine 104, histidine 107, and cysteine 175.

This sequence belongs to the GTP cyclohydrolase I family. Toroid-shaped homodecamer, composed of two pentamers of five dimers.

It catalyses the reaction GTP + H2O = 7,8-dihydroneopterin 3'-triphosphate + formate + H(+). It functions in the pathway cofactor biosynthesis; 7,8-dihydroneopterin triphosphate biosynthesis; 7,8-dihydroneopterin triphosphate from GTP: step 1/1. The polypeptide is GTP cyclohydrolase 1 (Brucella anthropi (strain ATCC 49188 / DSM 6882 / CCUG 24695 / JCM 21032 / LMG 3331 / NBRC 15819 / NCTC 12168 / Alc 37) (Ochrobactrum anthropi)).